We begin with the raw amino-acid sequence, 325 residues long: Cytochrome c biogenesis protein CcsA (325 aa).

Transmembrane regions (helical) follow at residues 14–34 (TFAI…FPNL), 36–56 (GLPA…AALL), 68–88 (ISNL…IHLL), 97–117 (LVGA…AFTL), 142–162 (VMMV…AFLV), 233–253 (VIGL…VWAN), 260–280 (WSWD…AAYL), and 294–314 (AILA…VNLL).

The protein belongs to the CcmF/CycK/Ccl1/NrfE/CcsA family. As to quaternary structure, may interact with ccs1.

The protein resides in the cellular thylakoid membrane. In terms of biological role, required during biogenesis of c-type cytochromes (cytochrome c6 and cytochrome f) at the step of heme attachment. This chain is Cytochrome c biogenesis protein CcsA, found in Synechococcus sp. (strain ATCC 27144 / PCC 6301 / SAUG 1402/1) (Anacystis nidulans).